The chain runs to 1136 residues: Pesticidal crystal protein Cry4B protoxin (1136 aa).

A domain I region spans residues 84-282 (TPERVWNDFM…PADKIDNTKL (199 aa)). Positions 283–466 (SKTEFTREIY…SNRVSFAWTH (184 aa)) are domain II. A domain III region spans residues 467 to 641 (KIVDPNNQIY…PITQSVLDET (175 aa)).

The protein belongs to the delta endotoxin family. In the presence of micelles active toxin forms oligomers that can be fit into cryo-EM maps as trimers. Binds to host (A.gambiae) cadherin AgCad1 (also called BT-R3), probably on the cell surface. Activated toxin may bind its host AgCad1 receptor as a monomer, but also forms an oligomer that is not active. It depends on Mg(2+) as a cofactor. Treatment of recombinant protein with A.aegypti 3rd instar larvae midgut extract for 1 hour yields major bands of 72 and 45 kDa, the combined proteins are toxic to mosquitoes. Longer digestion, which removes the 72 kDa protein, yields a non-toxic preparation. Proteolysis by yields a 65 kDa toxic protein and 48 and 17 kDa fragments which are not toxic. In terms of tissue distribution, host (A.gambiae) larval midgut; binds to host brush border membranes, probably to cadherin-AgCad1 (Cad1, also called BT-R3).

The protein localises to the spore. Its activity is regulated as follows. Toxic activity on Trichoplusia ni insect cells stably transfected with the AgCad1/BT-R3 receptor leads to oncosis, cell death characterized by cell swelling, membrane blebbing and depletion of energy reserves. Cell death is blocked by EDTA (but not EGTA) and is partially prevented by pretreatment with NF449 (inhibits G-s-alpha-60A and adenylyl cyclase, AC) and 2',5'-dideoxyadenosine 3'-diphosphate (ddADP, inhibits AC), while H-89 and PKAI 14-22 (both inhibit protein kinase A), ouabain (inhibits Na+/K+-ATPase) and a cell exocytosis inhibitor (Exo1) nearly completely prevent the action of the toxin in this system. The cAMP analog pCPT-cAMP and the AC activator FSK enhance toxicity. A pesticidal protein active against Aedes and Anopheles mosquito species; activity on Culex species is strain dependent. It remains toxic to permethrin-resistant strains of A.gambiae. Following activation of the protoxin by mosquito larvae midgut extract (or by chymotrypsin or trypsin treatment) it becomes insecticidal. Causes mosquito cell death by activating a host G-protein-coupled receptor which subsequently activates adenylyl cyclase and increases cAMP production. cAMP activates protein kinase A which sets off a series of downstream events which includes increased exocytosis (probably bringing more receptor to the cell membrane), Na+/K+-ATPase activation and eventual host cell death. Another group suggests that alkaline phosphatase serves as the insect receptor and that the protein forms pores in insect cell membranes. The polypeptide is Pesticidal crystal protein Cry4B protoxin (Bacillus thuringiensis subsp. israelensis).